Reading from the N-terminus, the 493-residue chain is 6-aminohexanoate-cyclic-dimer hydrolase (493 aa).

Residues Lys-72 and Ser-150 each act as charge relay system in the active site. Ser-174 functions as the Acyl-ester intermediate in the catalytic mechanism.

The protein belongs to the amidase family. In terms of assembly, homodimer.

The enzyme catalyses 1,8-diazacyclotetradecane-2,9-dione + H2O = N-(6-aminohexanoyl)-6-aminohexanoate. The protein operates within xenobiotic degradation; nylon-6 oligomer degradation. Functionally, catalyzes the hydrolysis of 6-aminohexanoic acid cyclic dimer (1,8-diazacyclotetradecane-2,9-dione) to form the linear dimer 6-aminohexanoyl-6-aminohexanoic acid. The sequence is that of 6-aminohexanoate-cyclic-dimer hydrolase (nylA) from Pseudomonas sp. (strain NK87).